The primary structure comprises 150 residues: Large ribosomal subunit protein bL9 (150 aa).

It belongs to the bacterial ribosomal protein bL9 family.

Functionally, binds to the 23S rRNA. The chain is Large ribosomal subunit protein bL9 from Alteromonas mediterranea (strain DSM 17117 / CIP 110805 / LMG 28347 / Deep ecotype).